Here is a 368-residue protein sequence, read N- to C-terminus: Ribosomal RNA large subunit methyltransferase M (368 aa).

S-adenosyl-L-methionine is bound by residues serine 189, 222–225 (CPGG), aspartate 241, aspartate 261, and aspartate 278. Lysine 307 functions as the Proton acceptor in the catalytic mechanism.

The protein belongs to the class I-like SAM-binding methyltransferase superfamily. RNA methyltransferase RlmE family. RlmM subfamily. Monomer.

The protein localises to the cytoplasm. It catalyses the reaction cytidine(2498) in 23S rRNA + S-adenosyl-L-methionine = 2'-O-methylcytidine(2498) in 23S rRNA + S-adenosyl-L-homocysteine + H(+). Functionally, catalyzes the 2'-O-methylation at nucleotide C2498 in 23S rRNA. In Yersinia pestis bv. Antiqua (strain Angola), this protein is Ribosomal RNA large subunit methyltransferase M.